We begin with the raw amino-acid sequence, 403 residues long: Formin-like protein 21b (403 aa).

The 380-residue stretch at 1–380 folds into the FH2 domain; the sequence is MELLFTATLL…KAAKEAEMEK (380 aa). Residues 373–403 form a disordered region; the sequence is AKEAEMEKTKKRVSLTNKKASGVGEEESCLI.

This sequence belongs to the formin-like family. Class-II subfamily.

In Arabidopsis thaliana (Mouse-ear cress), this protein is Formin-like protein 21b (FH21B).